A 375-amino-acid chain; its full sequence is Protein arginine N-methyltransferase 6 (375 aa).

Residues 1–36 (MSQPKRRKLESGGGGEGGEGTEEEDGGELEVAVPRP) form a disordered region. Over residues 19-28 (EGTEEEDGGE) the composition is skewed to acidic residues. Position 21 is a phosphothreonine (Thr21). Residue Arg38 is modified to Asymmetric dimethylarginine; by autocatalysis. Residues 44 to 374 (DQLYYQCYSD…EEKTKDFAME (331 aa)) form the SAM-dependent MTase PRMT-type domain. Positions 57, 66, 90, 112, and 141 each coordinate S-adenosyl-L-methionine. Residues Glu155 and Glu164 contribute to the active site.

It belongs to the class I-like SAM-binding methyltransferase superfamily. Protein arginine N-methyltransferase family. PRMT6 subfamily. In terms of assembly, interacts with (and methylates) HIV-1 Tat, Rev and Nucleocapsid protein p7 (NC). Interacts with EPB41L3 and NCOA1. Automethylation enhances its stability.

The protein resides in the nucleus. The enzyme catalyses L-arginyl-[protein] + 2 S-adenosyl-L-methionine = N(omega),N(omega)-dimethyl-L-arginyl-[protein] + 2 S-adenosyl-L-homocysteine + 2 H(+). Its function is as follows. Arginine methyltransferase that can catalyze the formation of both omega-N monomethylarginine (MMA) and asymmetrical dimethylarginine (aDMA), with a strong preference for the formation of aDMA. Preferentially methylates arginyl residues present in a glycine and arginine-rich domain and displays preference for monomethylated substrates. Specifically mediates the asymmetric dimethylation of histone H3 'Arg-2' to form H3R2me2a. H3R2me2a represents a specific tag for epigenetic transcriptional repression and is mutually exclusive with methylation on histone H3 'Lys-4' (H3K4me2 and H3K4me3). Acts as a transcriptional repressor of various genes such as HOXA2, THBS1 and TP53. Repression of TP53 blocks cellular senescence. Also methylates histone H2A and H4 'Arg-3' (H2AR3me and H4R3me, respectively). Acts as a regulator of DNA base excision during DNA repair by mediating the methylation of DNA polymerase beta (POLB), leading to the stimulation of its polymerase activity by enhancing DNA binding and processivity. Methylates HMGA1. Regulates alternative splicing events. Acts as a transcriptional coactivator of a number of steroid hormone receptors including ESR1, ESR2, PGR and NR3C1. Promotes fasting-induced transcriptional activation of the gluconeogenic program through methylation of the CRTC2 transcription coactivator. Methylates GPS2, protecting GPS2 from ubiquitination and degradation. Methylates SIRT7, inhibiting SIRT7 histone deacetylase activity and promoting mitochondria biogenesis. This chain is Protein arginine N-methyltransferase 6 (PRMT6), found in Bos taurus (Bovine).